Consider the following 129-residue polypeptide: Ribosome-binding factor A (129 aa).

Belongs to the RbfA family. Monomer. Binds 30S ribosomal subunits, but not 50S ribosomal subunits or 70S ribosomes.

The protein resides in the cytoplasm. Functionally, one of several proteins that assist in the late maturation steps of the functional core of the 30S ribosomal subunit. Associates with free 30S ribosomal subunits (but not with 30S subunits that are part of 70S ribosomes or polysomes). Required for efficient processing of 16S rRNA. May interact with the 5'-terminal helix region of 16S rRNA. This is Ribosome-binding factor A from Ectopseudomonas mendocina (strain ymp) (Pseudomonas mendocina).